The following is a 652-amino-acid chain: Acetyl-coenzyme A synthetase (652 aa).

CoA contacts are provided by residues 191-194, T311, and N335; that span reads RAGR. Residues 387-389, 411-416, D500, and R515 each bind ATP; these read GEP and DTWWQT. S523 contributes to the CoA binding site. Position 526 (R526) interacts with ATP. Residues V537, H539, and I542 each coordinate Mg(2+). R584 provides a ligand contact to CoA. At K609 the chain carries N6-acetyllysine.

The protein belongs to the ATP-dependent AMP-binding enzyme family. Requires Mg(2+) as cofactor. Post-translationally, acetylated. Deacetylation by the SIR2-homolog deacetylase activates the enzyme.

It carries out the reaction acetate + ATP + CoA = acetyl-CoA + AMP + diphosphate. In terms of biological role, catalyzes the conversion of acetate into acetyl-CoA (AcCoA), an essential intermediate at the junction of anabolic and catabolic pathways. Acs undergoes a two-step reaction. In the first half reaction, Acs combines acetate with ATP to form acetyl-adenylate (AcAMP) intermediate. In the second half reaction, it can then transfer the acetyl group from AcAMP to the sulfhydryl group of CoA, forming the product AcCoA. Functionally, enables the cell to use acetate during aerobic growth to generate energy via the TCA cycle, and biosynthetic compounds via the glyoxylate shunt. Acetylates CheY, the response regulator involved in flagellar movement and chemotaxis. The chain is Acetyl-coenzyme A synthetase from Escherichia coli O6:H1 (strain CFT073 / ATCC 700928 / UPEC).